We begin with the raw amino-acid sequence, 604 residues long: Aspartate--tRNA(Asp/Asn) ligase (604 aa).

L-aspartate is bound at residue glutamate 175. The aspartate stretch occupies residues 199-202 (QQFK). L-aspartate is bound by residues arginine 221 and histidine 456. 221–223 (RDE) serves as a coordination point for ATP. An ATP-binding site is contributed by glutamate 496. Residue arginine 503 participates in L-aspartate binding. 548–551 (GVDR) lines the ATP pocket.

The protein belongs to the class-II aminoacyl-tRNA synthetase family. Type 1 subfamily. As to quaternary structure, homodimer.

It localises to the cytoplasm. It catalyses the reaction tRNA(Asx) + L-aspartate + ATP = L-aspartyl-tRNA(Asx) + AMP + diphosphate. In terms of biological role, aspartyl-tRNA synthetase with relaxed tRNA specificity since it is able to aspartylate not only its cognate tRNA(Asp) but also tRNA(Asn). Reaction proceeds in two steps: L-aspartate is first activated by ATP to form Asp-AMP and then transferred to the acceptor end of tRNA(Asp/Asn). The protein is Aspartate--tRNA(Asp/Asn) ligase of Methylobacterium nodulans (strain LMG 21967 / CNCM I-2342 / ORS 2060).